The chain runs to 70 residues: Sec-independent protein translocase protein TatA (70 aa).

The helical transmembrane segment at 1 to 21 threads the bilayer; sequence MGSFSVWHWLIVLVIVLVLFG. The disordered stretch occupies residues 42-70; sequence GMADEDQTPPPADANANAKTVDHKADEIK. Basic and acidic residues predominate over residues 61-70; the sequence is TVDHKADEIK.

The protein belongs to the TatA/E family. As to quaternary structure, the Tat system comprises two distinct complexes: a TatABC complex, containing multiple copies of TatA, TatB and TatC subunits, and a separate TatA complex, containing only TatA subunits. Substrates initially bind to the TatABC complex, which probably triggers association of the separate TatA complex to form the active translocon.

The protein resides in the cell inner membrane. Part of the twin-arginine translocation (Tat) system that transports large folded proteins containing a characteristic twin-arginine motif in their signal peptide across membranes. TatA could form the protein-conducting channel of the Tat system. The polypeptide is Sec-independent protein translocase protein TatA (Agrobacterium fabrum (strain C58 / ATCC 33970) (Agrobacterium tumefaciens (strain C58))).